The chain runs to 389 residues: Sulfate adenylyltransferase (389 aa).

It belongs to the sulfate adenylyltransferase family.

It catalyses the reaction sulfate + ATP + H(+) = adenosine 5'-phosphosulfate + diphosphate. It functions in the pathway sulfur metabolism; hydrogen sulfide biosynthesis; sulfite from sulfate: step 1/3. The polypeptide is Sulfate adenylyltransferase (Deinococcus geothermalis (strain DSM 11300 / CIP 105573 / AG-3a)).